We begin with the raw amino-acid sequence, 410 residues long: 3-phosphoshikimate 1-carboxyvinyltransferase (410 aa).

3-phosphoshikimate-binding residues include lysine 21, serine 22, and arginine 26. A phosphoenolpyruvate-binding site is contributed by lysine 21. 2 residues coordinate phosphoenolpyruvate: glycine 69 and arginine 97. Serine 143, serine 144, glutamine 145, serine 171, aspartate 288, and lysine 315 together coordinate 3-phosphoshikimate. Residue glutamine 145 coordinates phosphoenolpyruvate. Catalysis depends on aspartate 288, which acts as the Proton acceptor. Arginine 319, arginine 364, and lysine 389 together coordinate phosphoenolpyruvate.

The protein belongs to the EPSP synthase family. As to quaternary structure, monomer.

Its subcellular location is the cytoplasm. It catalyses the reaction 3-phosphoshikimate + phosphoenolpyruvate = 5-O-(1-carboxyvinyl)-3-phosphoshikimate + phosphate. The protein operates within metabolic intermediate biosynthesis; chorismate biosynthesis; chorismate from D-erythrose 4-phosphate and phosphoenolpyruvate: step 6/7. Functionally, catalyzes the transfer of the enolpyruvyl moiety of phosphoenolpyruvate (PEP) to the 5-hydroxyl of shikimate-3-phosphate (S3P) to produce enolpyruvyl shikimate-3-phosphate and inorganic phosphate. The polypeptide is 3-phosphoshikimate 1-carboxyvinyltransferase (Bacteroides fragilis (strain ATCC 25285 / DSM 2151 / CCUG 4856 / JCM 11019 / LMG 10263 / NCTC 9343 / Onslow / VPI 2553 / EN-2)).